The following is a 420-amino-acid chain: D-tagatose-1,6-bisphosphate aldolase subunit GatZ (420 aa).

This sequence belongs to the GatZ/KbaZ family. GatZ subfamily. In terms of assembly, forms a complex with GatY.

Its pathway is carbohydrate metabolism; D-tagatose 6-phosphate degradation; D-glyceraldehyde 3-phosphate and glycerone phosphate from D-tagatose 6-phosphate: step 2/2. Its function is as follows. Component of the tagatose-1,6-bisphosphate aldolase GatYZ that is required for full activity and stability of the Y subunit. Could have a chaperone-like function for the proper and stable folding of GatY. When expressed alone, GatZ does not show any aldolase activity. Is involved in the catabolism of galactitol. The protein is D-tagatose-1,6-bisphosphate aldolase subunit GatZ of Escherichia coli O6:H1 (strain CFT073 / ATCC 700928 / UPEC).